The chain runs to 868 residues: MHELYQPREIEAAAQTFWDEQKSFEVSEQPGKDTFYCLSMFPYPSGKLHMGHVRNYTIGDVISRYQRMLGKNVLQPLGWDAFGMPAENAAIDNNVAPAKWTYENIDYMKTQLKSLGLAVDWSREVTTCKPDYYRWEQWLFTRLFEKGVIYRKNGTVNWDPIDQTVLANEQVIDGRGWRSGALIEKREIPMYYFKITAYADELLESLDELPGWPEQVKTMQRNWIGRSRGMEVQFPYDQASIGEAGALKVFTTRPDTLMGATYVAVAAEHPLATLAAQGNPALQAFIDECKGGSVAEADVATQEKKGQATSLFVEHPLTGEKLPVWVANYVLMHYGDGAVMAVPAHDERDFEFATQYGLPIKPVVRTSAGDQTPAPWQPAYGEHGELINSGEFTGLTFQDAFDAIEAALVKKSLGQSRTQFRLRDWGISRQRYWGCPIPIVHCDTCGDVPVPEDQLPVVLPEDVVPDGAGSPLARMPEFYECSCPKCGAPAKRETDTMDTFVESSWYYARYASPHYEGGLVEPNAANHWLPVDQYIGGIEHAILHLLYARFFHKLMRDEGLVTSNEPFKNLLTQGMVNAETYFRMETSGKKTWINPADVTLERDAKAKVISARLTSDGLPVEIGGTEKMSKSKKNGIDPQTMIDQYGADTCRLFMMFASPPDMSLEWSDSGVEGSHRFLRRVWRLAQAHVTQGPSTGLDVAALSDEQKAIRRAIHQAIRQASQDIGQNQKFNTAVAQVMTLMNVLEKAPQDTPQDRALMQEGVETVALLLAPITPHISHELWKQLGHNEPVIDAGWPAFDASALVQDSLQLVIQVNGKLRGHIEMPASASREEVEAAARVNENVLRFTDGLTIRKVIVVPGKLVNIVAS.

The 'HIGH' region signature appears at 42 to 52 (PYPSGKLHMGH). A 'KMSKS' region motif is present at residues 627–631 (KMSKS). Residue Lys-630 participates in ATP binding.

The protein belongs to the class-I aminoacyl-tRNA synthetase family.

It is found in the cytoplasm. The enzyme catalyses tRNA(Leu) + L-leucine + ATP = L-leucyl-tRNA(Leu) + AMP + diphosphate. The sequence is that of Leucine--tRNA ligase from Pseudomonas syringae pv. syringae (strain B728a).